The following is a 307-amino-acid chain: MPIKIPDTLPAFETLVQEGVRVMTETLAIRQDIRPLQIGLLNLMPNKIKTELQMARLVGASPLQVELSLIRIGGHKAKNTSEDHLLAFYQTWEEVKHRKFDGFIITGAPIELLPYEDVTYWPEMQEILDWTETNVHSTMNVCWGAMAAIYHFHGVPKYELKEKAFGVYRHRNLKPSSIYLNGFSDNFEVPVSRWTEVRRDDIEKSDELEILMESSEMGVCLVHEKRGRRLYMFNHVEYDSTSLSDEYFRDVNTGVPIKMPHNYFPHNDPALAPQNRWRSHAHLLFGNWINEIYQTTPFDVEEIGMDL.

C142 serves as the catalytic Acyl-thioester intermediate. Positions 163 and 192 each coordinate substrate. Residue H235 is the Proton acceptor of the active site. E237 is an active-site residue. R249 is a substrate binding site.

The protein belongs to the MetA family.

It is found in the cytoplasm. It carries out the reaction L-homoserine + acetyl-CoA = O-acetyl-L-homoserine + CoA. The protein operates within amino-acid biosynthesis; L-methionine biosynthesis via de novo pathway; O-acetyl-L-homoserine from L-homoserine: step 1/1. In terms of biological role, transfers an acetyl group from acetyl-CoA to L-homoserine, forming acetyl-L-homoserine. The polypeptide is Homoserine O-acetyltransferase (Rhizobium leguminosarum bv. trifolii (strain WSM2304)).